A 156-amino-acid chain; its full sequence is Small ribosomal subunit protein uS7 (156 aa).

The protein belongs to the universal ribosomal protein uS7 family. As to quaternary structure, part of the 30S ribosomal subunit. Contacts proteins S9 and S11.

Its function is as follows. One of the primary rRNA binding proteins, it binds directly to 16S rRNA where it nucleates assembly of the head domain of the 30S subunit. Is located at the subunit interface close to the decoding center, probably blocks exit of the E-site tRNA. The sequence is that of Small ribosomal subunit protein uS7 from Streptococcus uberis (strain ATCC BAA-854 / 0140J).